Reading from the N-terminus, the 235-residue chain is Adenosine 5'-phosphosulfate reductase (235 aa).

Positions 121, 122, 204, and 207 each coordinate [4Fe-4S] cluster. Catalysis depends on Cys-230, which acts as the Nucleophile; cysteine thiosulfonate intermediate.

It belongs to the PAPS reductase family. CysH subfamily. The cofactor is [4Fe-4S] cluster.

The protein resides in the cytoplasm. It catalyses the reaction [thioredoxin]-disulfide + sulfite + AMP + 2 H(+) = adenosine 5'-phosphosulfate + [thioredoxin]-dithiol. The protein operates within sulfur metabolism; hydrogen sulfide biosynthesis; sulfite from sulfate. In terms of biological role, catalyzes the formation of sulfite from adenosine 5'-phosphosulfate (APS) using thioredoxin as an electron donor. This Geobacillus sp. (strain WCH70) protein is Adenosine 5'-phosphosulfate reductase.